The following is a 197-amino-acid chain: Imidazoleglycerol-phosphate dehydratase (197 aa).

This sequence belongs to the imidazoleglycerol-phosphate dehydratase family.

It localises to the cytoplasm. It catalyses the reaction D-erythro-1-(imidazol-4-yl)glycerol 3-phosphate = 3-(imidazol-4-yl)-2-oxopropyl phosphate + H2O. It functions in the pathway amino-acid biosynthesis; L-histidine biosynthesis; L-histidine from 5-phospho-alpha-D-ribose 1-diphosphate: step 6/9. The sequence is that of Imidazoleglycerol-phosphate dehydratase from Clostridium acetobutylicum (strain ATCC 824 / DSM 792 / JCM 1419 / IAM 19013 / LMG 5710 / NBRC 13948 / NRRL B-527 / VKM B-1787 / 2291 / W).